A 447-amino-acid chain; its full sequence is tRNA-2-methylthio-N(6)-dimethylallyladenosine synthase (447 aa).

An MTTase N-terminal domain is found at Lys-3 to Thr-120. [4Fe-4S] cluster-binding residues include Cys-12, Cys-49, Cys-83, Cys-157, Cys-161, and Cys-164. One can recognise a Radical SAM core domain in the interval Arg-143–Glu-375. Residues Arg-378–Asp-442 form the TRAM domain.

It belongs to the methylthiotransferase family. MiaB subfamily. Monomer. [4Fe-4S] cluster serves as cofactor.

The protein localises to the cytoplasm. It catalyses the reaction N(6)-dimethylallyladenosine(37) in tRNA + (sulfur carrier)-SH + AH2 + 2 S-adenosyl-L-methionine = 2-methylsulfanyl-N(6)-dimethylallyladenosine(37) in tRNA + (sulfur carrier)-H + 5'-deoxyadenosine + L-methionine + A + S-adenosyl-L-homocysteine + 2 H(+). Functionally, catalyzes the methylthiolation of N6-(dimethylallyl)adenosine (i(6)A), leading to the formation of 2-methylthio-N6-(dimethylallyl)adenosine (ms(2)i(6)A) at position 37 in tRNAs that read codons beginning with uridine. This is tRNA-2-methylthio-N(6)-dimethylallyladenosine synthase from Ectopseudomonas mendocina (strain ymp) (Pseudomonas mendocina).